The primary structure comprises 356 residues: Septin-12 (356 aa).

The interval 1-23 is disordered; the sequence is MDERRTPSPCSSRPSSPRTPPCE. Residues 7–16 show a composition bias toward low complexity; that stretch reads PSPCSSRPSS. Positions 44–315 constitute a Septin-type G domain; it reads TGFEFNIMVV…ENYRVLRLNE (272 aa). Residues 44-317 form an interaction with SEPTIN7 region; that stretch reads TGFEFNIMVV…YRVLRLNESH (274 aa). The tract at residues 54–61 is G1 motif; that stretch reads GQSGLGKS. Residues 54–61, T87, G113, 193–201, G249, and R264 contribute to the GTP site; these read GQSGLGKS and RADSLTIEE. Positions 110–113 are G3 motif; sequence DTPG. The interval 192 to 195 is G4 motif; it reads ARAD. The segment at 256-356 is self-association (via N-terminus) to polymerize octameric septin 12-7-6-2/4-2/4-6-7-12 filaments; the sequence is VNGRCVLGRK…RSKDPRDDEC (101 aa). The segment at 330–356 is disordered; it reads PASPGQLMAPGPEKVRKRSKDPRDDEC.

Belongs to the TRAFAC class TrmE-Era-EngA-EngB-Septin-like GTPase superfamily. Septin GTPase family. As to quaternary structure, septins polymerize into heterooligomeric protein complexes that form filaments, and can associate with cellular membranes, actin filaments and microtubules. GTPase activity is required for filament formation. Interacts with SEPTIN6 and SEPTIN11. Self-associates. Component of a octameric complex consisting of SEPTIN12, SEPTIN7, SEPTIN6 and SEPTIN2 or SEPTIN4 in the order 12-7-6-2-2-6-7-12 or 12-7-6-4-4-6-7-12 and located in the sperm annulus; the octamer polymerizes into filaments via the SEPTIN12 N- and C-termini; the SEPTIN12:SEPTIN7 association is mediated by the GTP-binding domains. Interacts with SPAG4 and LMNB1. Associates with alpha- and beta-tubulins. As to expression, predominantly expressed in testis and epididymis. Component of the sperm tail annulus (at protein level).

Its subcellular location is the cytoplasm. The protein resides in the cytoskeleton. It is found in the spindle. The protein localises to the cell projection. It localises to the cilium. Its subcellular location is the flagellum. In terms of biological role, filament-forming cytoskeletal GTPase. May play a role in cytokinesis (Potential). Involved in spermatogenesis. Involved in the morphogenesis of sperm heads and the elongation of sperm tails probably implicating the association with alpha- and beta-tubulins. Forms a filamentous structure with SEPTIN7, SEPTIN6, SEPTIN2 and probably SEPTIN4 at the sperm annulus which is required for the structural integrity and motility of the sperm tail during postmeiotic differentiation. The protein is Septin-12 of Rattus norvegicus (Rat).